The sequence spans 136 residues: Large ribosomal subunit protein uL16 (136 aa).

It belongs to the universal ribosomal protein uL16 family. Part of the 50S ribosomal subunit.

Binds 23S rRNA and is also seen to make contacts with the A and possibly P site tRNAs. The protein is Large ribosomal subunit protein uL16 of Haemophilus ducreyi (strain 35000HP / ATCC 700724).